The primary structure comprises 350 residues: Chorismate synthase (350 aa).

The NADP(+) site is built by arginine 39 and arginine 45. A disordered region spans residues lysine 85–glycine 104. FMN-binding positions include arginine 119–serine 121, glutamine 213–glycine 214, glycine 258, lysine 273–threonine 277, and arginine 299.

Belongs to the chorismate synthase family. In terms of assembly, homotetramer. Requires FMNH2 as cofactor.

It carries out the reaction 5-O-(1-carboxyvinyl)-3-phosphoshikimate = chorismate + phosphate. It functions in the pathway metabolic intermediate biosynthesis; chorismate biosynthesis; chorismate from D-erythrose 4-phosphate and phosphoenolpyruvate: step 7/7. In terms of biological role, catalyzes the anti-1,4-elimination of the C-3 phosphate and the C-6 proR hydrogen from 5-enolpyruvylshikimate-3-phosphate (EPSP) to yield chorismate, which is the branch point compound that serves as the starting substrate for the three terminal pathways of aromatic amino acid biosynthesis. This reaction introduces a second double bond into the aromatic ring system. This is Chorismate synthase from Caldanaerobacter subterraneus subsp. tengcongensis (strain DSM 15242 / JCM 11007 / NBRC 100824 / MB4) (Thermoanaerobacter tengcongensis).